A 24-amino-acid polypeptide reads, in one-letter code: Arginine attenuator peptide (24 aa).

This sequence belongs to the arginine attenuator peptide family.

Functionally, arginine attenuator peptide (AAP) that has a regulatory role in the production of arginine-specific carbamoyl phosphate synthetase. Encoded by an upstream open reading frame (uORF) within the 5'-leader region of arginine-specific carbamoyl phosphate synthetase small chain (arg-2) mRNA, it attenuates the translation of the downstream arg-2 ORF. In the presence of high concentrations of arginine, ribosomes translating the uORF encoding AAP stall at the termination codon, resulting in reduced translation from the downstream arg-2 initiation codon. In Neurospora crassa (strain ATCC 24698 / 74-OR23-1A / CBS 708.71 / DSM 1257 / FGSC 987), this protein is Arginine attenuator peptide.